Consider the following 124-residue polypeptide: Small ribosomal subunit protein uS12 (124 aa).

The residue at position 89 (Asp-89) is a 3-methylthioaspartic acid.

Belongs to the universal ribosomal protein uS12 family. Part of the 30S ribosomal subunit. Contacts proteins S8 and S17. May interact with IF1 in the 30S initiation complex.

Its function is as follows. With S4 and S5 plays an important role in translational accuracy. Functionally, interacts with and stabilizes bases of the 16S rRNA that are involved in tRNA selection in the A site and with the mRNA backbone. Located at the interface of the 30S and 50S subunits, it traverses the body of the 30S subunit contacting proteins on the other side and probably holding the rRNA structure together. The combined cluster of proteins S8, S12 and S17 appears to hold together the shoulder and platform of the 30S subunit. This is Small ribosomal subunit protein uS12 from Pasteurella multocida (strain Pm70).